We begin with the raw amino-acid sequence, 607 residues long: UvrABC system protein C (607 aa).

Positions 16–94 (GRPGVYRMFD…IKEWRPPYNI (79 aa)) constitute a GIY-YIG domain. One can recognise a UVR domain in the interval 203 to 238 (NALTDELSGAMEQAASTLDFERAAELRDQISLLRRV).

It belongs to the UvrC family. As to quaternary structure, interacts with UvrB in an incision complex.

It is found in the cytoplasm. In terms of biological role, the UvrABC repair system catalyzes the recognition and processing of DNA lesions. UvrC both incises the 5' and 3' sides of the lesion. The N-terminal half is responsible for the 3' incision and the C-terminal half is responsible for the 5' incision. The protein is UvrABC system protein C of Pseudomonas fluorescens (strain SBW25).